A 791-amino-acid chain; its full sequence is Endonuclease MutS2 (791 aa).

Gly339–Thr346 provides a ligand contact to ATP. One can recognise a Smr domain in the interval Leu715–Lys790.

It belongs to the DNA mismatch repair MutS family. MutS2 subfamily. As to quaternary structure, homodimer. Binds to stalled ribosomes, contacting rRNA.

In terms of biological role, endonuclease that is involved in the suppression of homologous recombination and thus may have a key role in the control of bacterial genetic diversity. Functionally, acts as a ribosome collision sensor, splitting the ribosome into its 2 subunits. Detects stalled/collided 70S ribosomes which it binds and splits by an ATP-hydrolysis driven conformational change. Acts upstream of the ribosome quality control system (RQC), a ribosome-associated complex that mediates the extraction of incompletely synthesized nascent chains from stalled ribosomes and their subsequent degradation. Probably generates substrates for RQC. The sequence is that of Endonuclease MutS2 from Halothermothrix orenii (strain H 168 / OCM 544 / DSM 9562).